The following is a 264-amino-acid chain: Thiazole synthase (264 aa).

Lys-106 serves as the catalytic Schiff-base intermediate with DXP. Residues Gly-167, 193–194, and 215–216 contribute to the 1-deoxy-D-xylulose 5-phosphate site; these read AG and NT.

Belongs to the ThiG family. As to quaternary structure, homotetramer. Forms heterodimers with either ThiH or ThiS.

It is found in the cytoplasm. It catalyses the reaction [ThiS sulfur-carrier protein]-C-terminal-Gly-aminoethanethioate + 2-iminoacetate + 1-deoxy-D-xylulose 5-phosphate = [ThiS sulfur-carrier protein]-C-terminal Gly-Gly + 2-[(2R,5Z)-2-carboxy-4-methylthiazol-5(2H)-ylidene]ethyl phosphate + 2 H2O + H(+). The protein operates within cofactor biosynthesis; thiamine diphosphate biosynthesis. Catalyzes the rearrangement of 1-deoxy-D-xylulose 5-phosphate (DXP) to produce the thiazole phosphate moiety of thiamine. Sulfur is provided by the thiocarboxylate moiety of the carrier protein ThiS. In vitro, sulfur can be provided by H(2)S. The polypeptide is Thiazole synthase (Stenotrophomonas maltophilia (strain K279a)).